We begin with the raw amino-acid sequence, 361 residues long: Peptide chain release factor 1 (361 aa).

At Q237 the chain carries N5-methylglutamine. Positions 283–296 (VEDEKRRSEEESTR) are enriched in basic and acidic residues. Positions 283–305 (VEDEKRRSEEESTRRNLVSSGDR) are disordered.

Belongs to the prokaryotic/mitochondrial release factor family. In terms of processing, methylated by PrmC. Methylation increases the termination efficiency of RF1.

It is found in the cytoplasm. Functionally, peptide chain release factor 1 directs the termination of translation in response to the peptide chain termination codons UAG and UAA. The sequence is that of Peptide chain release factor 1 from Shewanella woodyi (strain ATCC 51908 / MS32).